Reading from the N-terminus, the 222-residue chain is Superoxide dismutase [Mn], mitochondrial (222 aa).

The transit peptide at 1 to 24 (MLCRAACSAGRRLGPAASTAGSRH) directs the protein to the mitochondrion. A Mn(2+)-binding site is contributed by histidine 50. The residue at position 58 (tyrosine 58) is a 3'-nitrotyrosine. N6-acetyllysine; alternate is present on residues lysine 68 and lysine 75. N6-succinyllysine; alternate is present on residues lysine 68 and lysine 75. Residue histidine 98 participates in Mn(2+) binding. N6-acetyllysine is present on lysine 114. Lysine 122 and lysine 130 each carry N6-acetyllysine; alternate. Lysine 122 and lysine 130 each carry N6-succinyllysine; alternate. Mn(2+) contacts are provided by aspartate 183 and histidine 187. Lysine 202 is subject to N6-acetyllysine.

Belongs to the iron/manganese superoxide dismutase family. Homotetramer. Requires Mn(2+) as cofactor. Post-translationally, nitrated under oxidative stress. Nitration coupled with oxidation inhibits the catalytic activity. Acetylation at Lys-122 decreases enzymatic activity. Deacetylated by SIRT3 upon exposure to ionizing radiations or after long fasting. In terms of processing, polyubiquitinated; leading to proteasomal degradation. Deubiquitinated by USP36 which increases protein stability.

It localises to the mitochondrion matrix. It catalyses the reaction 2 superoxide + 2 H(+) = H2O2 + O2. Its function is as follows. Destroys superoxide anion radicals which are normally produced within the cells and which are toxic to biological systems. This Rattus norvegicus (Rat) protein is Superoxide dismutase [Mn], mitochondrial (Sod2).